The primary structure comprises 302 residues: Sulfate adenylyltransferase subunit 2 (302 aa).

This sequence belongs to the PAPS reductase family. CysD subfamily. As to quaternary structure, heterodimer composed of CysD, the smaller subunit, and CysN.

It carries out the reaction sulfate + ATP + H(+) = adenosine 5'-phosphosulfate + diphosphate. Its pathway is sulfur metabolism; hydrogen sulfide biosynthesis; sulfite from sulfate: step 1/3. Its function is as follows. With CysN forms the ATP sulfurylase (ATPS) that catalyzes the adenylation of sulfate producing adenosine 5'-phosphosulfate (APS) and diphosphate, the first enzymatic step in sulfur assimilation pathway. APS synthesis involves the formation of a high-energy phosphoric-sulfuric acid anhydride bond driven by GTP hydrolysis by CysN coupled to ATP hydrolysis by CysD. This chain is Sulfate adenylyltransferase subunit 2, found in Psychromonas ingrahamii (strain DSM 17664 / CCUG 51855 / 37).